We begin with the raw amino-acid sequence, 424 residues long: Insertion element IS2A uncharacterized 48.2 kDa protein (424 aa).

Positions 229–412 (KPAVPPSKRA…SPREYLRHGA (184 aa)) constitute an Integrase catalytic domain.

The protein belongs to the transposase 8 family.

In Escherichia coli, this protein is Insertion element IS2A uncharacterized 48.2 kDa protein.